The sequence spans 320 residues: Cytochrome f (320 aa).

Residues 1-35 form the signal peptide; sequence MQTRNAFSWLKKQITRSISVSLMIYILTRTSISSA. The heme site is built by tyrosine 36, cysteine 56, cysteine 59, and histidine 60. A helical transmembrane segment spans residues 286–306; sequence VQGLLFFLASVILAQIFLVLK.

Belongs to the cytochrome f family. In terms of assembly, the 4 large subunits of the cytochrome b6-f complex are cytochrome b6, subunit IV (17 kDa polypeptide, petD), cytochrome f and the Rieske protein, while the 4 small subunits are PetG, PetL, PetM and PetN. The complex functions as a dimer. Requires heme as cofactor.

Its subcellular location is the plastid. The protein localises to the chloroplast thylakoid membrane. In terms of biological role, component of the cytochrome b6-f complex, which mediates electron transfer between photosystem II (PSII) and photosystem I (PSI), cyclic electron flow around PSI, and state transitions. This chain is Cytochrome f, found in Solanum bulbocastanum (Wild potato).